Reading from the N-terminus, the 349-residue chain is Galactose-1-phosphate uridylyltransferase (349 aa).

Arg29 to Arg32 lines the UDP-alpha-D-glucose pocket. Zn(2+)-binding residues include Cys53 and Cys56. Residue Asn78–Asp79 coordinates UDP-alpha-D-glucose. His116 is a binding site for Zn(2+). UDP-alpha-D-glucose-binding positions include Asn154 and Gly160–Ser162. His165 is a binding site for Zn(2+). His167 (tele-UMP-histidine intermediate) is an active-site residue. Gln169 is a UDP-alpha-D-glucose binding site. Glu183, His282, His297, and His299 together coordinate Fe cation. UDP-alpha-D-glucose contacts are provided by residues Lys312–Phe313, Tyr317–Glu318, and Gln324.

This sequence belongs to the galactose-1-phosphate uridylyltransferase type 1 family. Zn(2+) is required as a cofactor.

It catalyses the reaction alpha-D-galactose 1-phosphate + UDP-alpha-D-glucose = alpha-D-glucose 1-phosphate + UDP-alpha-D-galactose. It functions in the pathway carbohydrate metabolism; galactose metabolism. This chain is Galactose-1-phosphate uridylyltransferase (galT), found in Haemophilus influenzae (strain ATCC 51907 / DSM 11121 / KW20 / Rd).